We begin with the raw amino-acid sequence, 473 residues long: Aspartyl/glutamyl-tRNA(Asn/Gln) amidotransferase subunit B (473 aa).

Belongs to the GatB/GatE family. GatB subfamily. As to quaternary structure, heterotrimer of A, B and C subunits.

The catalysed reaction is L-glutamyl-tRNA(Gln) + L-glutamine + ATP + H2O = L-glutaminyl-tRNA(Gln) + L-glutamate + ADP + phosphate + H(+). The enzyme catalyses L-aspartyl-tRNA(Asn) + L-glutamine + ATP + H2O = L-asparaginyl-tRNA(Asn) + L-glutamate + ADP + phosphate + 2 H(+). Allows the formation of correctly charged Asn-tRNA(Asn) or Gln-tRNA(Gln) through the transamidation of misacylated Asp-tRNA(Asn) or Glu-tRNA(Gln) in organisms which lack either or both of asparaginyl-tRNA or glutaminyl-tRNA synthetases. The reaction takes place in the presence of glutamine and ATP through an activated phospho-Asp-tRNA(Asn) or phospho-Glu-tRNA(Gln). This Methanococcoides burtonii (strain DSM 6242 / NBRC 107633 / OCM 468 / ACE-M) protein is Aspartyl/glutamyl-tRNA(Asn/Gln) amidotransferase subunit B.